Reading from the N-terminus, the 346-residue chain is Ferredoxin--NADP reductase 1 (346 aa).

FAD is bound by residues glutamate 37, lysine 45, tyrosine 49, isoleucine 89, proline 124, aspartate 287, and serine 328.

This sequence belongs to the ferredoxin--NADP reductase type 2 family. As to quaternary structure, homodimer. FAD is required as a cofactor.

The catalysed reaction is 2 reduced [2Fe-2S]-[ferredoxin] + NADP(+) + H(+) = 2 oxidized [2Fe-2S]-[ferredoxin] + NADPH. This chain is Ferredoxin--NADP reductase 1, found in Bacillus pumilus (strain SAFR-032).